Consider the following 159-residue polypeptide: Phosphopantetheine adenylyltransferase (159 aa).

Ser9 lines the substrate pocket. ATP-binding positions include 9 to 10 (SF) and His17. Residues Lys41, Leu74, and Lys88 each contribute to the substrate site. ATP contacts are provided by residues 89–91 (GLR), Glu99, and 123–129 (YLHLSST).

It belongs to the bacterial CoaD family. In terms of assembly, homohexamer. Mg(2+) serves as cofactor.

It localises to the cytoplasm. The enzyme catalyses (R)-4'-phosphopantetheine + ATP + H(+) = 3'-dephospho-CoA + diphosphate. It participates in cofactor biosynthesis; coenzyme A biosynthesis; CoA from (R)-pantothenate: step 4/5. In terms of biological role, reversibly transfers an adenylyl group from ATP to 4'-phosphopantetheine, yielding dephospho-CoA (dPCoA) and pyrophosphate. This Arthrobacter sp. (strain FB24) protein is Phosphopantetheine adenylyltransferase.